Consider the following 194-residue polypeptide: Ras-related protein RabU (194 aa).

Position 19–27 (19–27) interacts with GTP; sequence GYDYECGIK. Residues 42 to 50 carry the Effector region motif; that stretch reads PESQVGVDF. Residues 68–72 and 130–133 contribute to the GTP site; these read PQNKY and NNSE.

It belongs to the small GTPase superfamily. Rab family.

The sequence is that of Ras-related protein RabU (rabU) from Dictyostelium discoideum (Social amoeba).